We begin with the raw amino-acid sequence, 111 residues long: MGMPNLGDMMKQIQQAGEKMQDVQKQLEKIVAYGEAGGGMVKVSVNGKQKLLTLQIDPDIMDDAEMVQDLVIAAVNSALDEAAKVAQEELVKVTGGMMNPADILKNLNLGK.

This sequence belongs to the YbaB/EbfC family. As to quaternary structure, homodimer.

The protein resides in the cytoplasm. It localises to the nucleoid. Functionally, binds to DNA and alters its conformation. May be involved in regulation of gene expression, nucleoid organization and DNA protection. The sequence is that of Nucleoid-associated protein Cpha266_1171 from Chlorobium phaeobacteroides (strain DSM 266 / SMG 266 / 2430).